The following is an 897-amino-acid chain: DNA mismatch repair protein MutS (897 aa).

654-661 contacts ATP; it reads GPNMAGKS.

This sequence belongs to the DNA mismatch repair MutS family.

In terms of biological role, this protein is involved in the repair of mismatches in DNA. It is possible that it carries out the mismatch recognition step. This protein has a weak ATPase activity. The protein is DNA mismatch repair protein MutS of Maricaulis maris (strain MCS10) (Caulobacter maris).